The sequence spans 1015 residues: DNA polymerase catalytic subunit (1015 aa).

Belongs to the DNA polymerase type-B family. As to quaternary structure, forms a complex with the ssDNA-binding protein BALF2, the DNA polymerase processivity factor BMRF1, and the alkaline exonuclease BGLF5. Interacts with the putative helicase-primase complex composed of BBLF4, BSLF1 and BBLF2/3 proteins; these interactions may coordinate leading and lagging strand DNA synthesis at the replication fork.

It localises to the host nucleus. It catalyses the reaction DNA(n) + a 2'-deoxyribonucleoside 5'-triphosphate = DNA(n+1) + diphosphate. Its function is as follows. Replicates viral genomic DNA in the late phase of lytic infection, producing long concatemeric DNA. The replication complex is composed of six viral proteins: the DNA polymerase, processivity factor, primase, primase-associated factor, helicase, and ssDNA-binding protein. The chain is DNA polymerase catalytic subunit from Epstein-Barr virus (strain B95-8) (HHV-4).